The primary structure comprises 448 residues: Carbon catabolite repressor protein 4 homolog 3 (448 aa).

The segment covering 50–67 (SSTSGPSDSNPESSSNRS) has biased composition (low complexity). The interval 50–92 (SSTSGPSDSNPESSSNRSYSRRWQNPLPRRQHPDQIPSSQIAR) is disordered. Glutamate 162 serves as a coordination point for Mg(2+).

Belongs to the CCR4/nocturin family. Component of the CCR4-NOT complex, at least composed of CRR4 and CAF1 proteins. Requires Mg(2+) as cofactor.

Its subcellular location is the nucleus. The protein localises to the cytoplasm. It carries out the reaction Exonucleolytic cleavage of poly(A) to 5'-AMP.. In terms of biological role, acts as a catalytic component of the CCR4-NOT core complex, which in the nucleus seems to be a general transcription factor, and in the cytoplasm the major mRNA deadenylase involved in mRNA turnover. This Arabidopsis thaliana (Mouse-ear cress) protein is Carbon catabolite repressor protein 4 homolog 3 (CCR4-3).